Consider the following 355-residue polypeptide: Erythronate-4-phosphate dehydrogenase (355 aa).

Substrate is bound by residues S45 and T66. An NAD(+)-binding site is contributed by D146. The active site involves R206. D229 serves as a coordination point for NAD(+). The active site involves E234. H251 acts as the Proton donor in catalysis. G254 is a binding site for NAD(+). Y255 provides a ligand contact to substrate.

This sequence belongs to the D-isomer specific 2-hydroxyacid dehydrogenase family. PdxB subfamily. As to quaternary structure, homodimer.

It localises to the cytoplasm. The catalysed reaction is 4-phospho-D-erythronate + NAD(+) = (R)-3-hydroxy-2-oxo-4-phosphooxybutanoate + NADH + H(+). The protein operates within cofactor biosynthesis; pyridoxine 5'-phosphate biosynthesis; pyridoxine 5'-phosphate from D-erythrose 4-phosphate: step 2/5. In terms of biological role, catalyzes the oxidation of erythronate-4-phosphate to 3-hydroxy-2-oxo-4-phosphonooxybutanoate. The sequence is that of Erythronate-4-phosphate dehydrogenase from Acinetobacter baumannii (strain ACICU).